The chain runs to 447 residues: MSAATLKVSTESRPSSRLAVTVTVPGERCTASYEEAIKSLSRSINLPGFRKGKVPRSVLVQQLGGVRIKATALEKLIDSAWRDAIKQESLEPISQPDLSSGFDGLLESFNPGDELTFTLEADVAPTPKLKSTKGLKAEYEAVVYDASRVDSMIEDSRKQLATVVPVEGRAAEKGDIAVLGFKGTYSDDGSEIEGGSADSMDVDLDNGRMIPGFIEGVIGMKVGESKSVDCQFPDDYPKEDARGRKAAFAIELKDLKTRELPELDDAFAKQASEQDTMADLRKDLEQRLKDDAERRQTSNRNDGLVKALVEQLEVDLPEALIQQESRNLVEQTAAQFAQQGMDVKSLFTPDLIRNLMQNSRPEAEERLRRSFALTALAEAEDIKLDDSAIDTKLKEVKKDLSADAKVDPERLRQAVMDDLMQEQLMSWLETNSTLTEKAPEPESDTKS.

The PPIase FKBP-type domain maps to 174–261 (GDIAVLGFKG…LKDLKTRELP (88 aa)).

Belongs to the FKBP-type PPIase family. Tig subfamily.

The protein resides in the cytoplasm. The enzyme catalyses [protein]-peptidylproline (omega=180) = [protein]-peptidylproline (omega=0). Involved in protein export. Acts as a chaperone by maintaining the newly synthesized protein in an open conformation. Functions as a peptidyl-prolyl cis-trans isomerase. The polypeptide is Trigger factor (Synechococcus sp. (strain CC9902)).